The sequence spans 561 residues: MRSDTIKKGFDKAPHRSLLRATGLRDEDFDKPFIGIANSYIDIIPGHFFLHEYGEIVKAAIREAGGVPFVFNTIGVDDGIAMGHDGMLYSLPSREIIADSIETVMNAHKLDALICIPNCDKIVPGMIMGALRVNVPTVFVSGGPMAAGHKKDGTPIDLATAFEAVGEHAEGKITDEELYDIECNACPSGGSCSGMFTANSMNTLCEAMGIALPGNGTVLAMTPRRIEMVKAAAKRIVEMAKADDSKYNLKNVLNEKAVHNAFVVDMAMGGSSNTVLHMLAIAREAGVDFPIEKINEIADNVAHIAKISPSLTTVHMDDIDKAGGVNAVMKEISRRGGLLYLENPTVTGETLGERIADAKILNEEIIHRNENAYSQVGGLSILFGNLATEGAVVKTAGIELNMRQFKGTAICFNSQPEAITGIMKHKVKPGNVVVIRYEGPKGGPGMQEMLAPTALIQGMGLGDSVALITDGRFSGATKGASIGHVSPEAAEGGLIAFIEDGDEIELDTDKHLLRLNVSDDVIAARKANYKPYKNEVKSKWLKRYQLLVSNASNGAVLKTEL.

Residue D78 participates in Mg(2+) binding. C119 contributes to the [2Fe-2S] cluster binding site. Mg(2+) is bound by residues D120 and K121. K121 bears the N6-carboxylysine mark. C192 serves as a coordination point for [2Fe-2S] cluster. E448 is a Mg(2+) binding site. The active-site Proton acceptor is the S474.

This sequence belongs to the IlvD/Edd family. In terms of assembly, homodimer. [2Fe-2S] cluster is required as a cofactor. Requires Mg(2+) as cofactor.

The enzyme catalyses (2R)-2,3-dihydroxy-3-methylbutanoate = 3-methyl-2-oxobutanoate + H2O. It carries out the reaction (2R,3R)-2,3-dihydroxy-3-methylpentanoate = (S)-3-methyl-2-oxopentanoate + H2O. Its pathway is amino-acid biosynthesis; L-isoleucine biosynthesis; L-isoleucine from 2-oxobutanoate: step 3/4. It functions in the pathway amino-acid biosynthesis; L-valine biosynthesis; L-valine from pyruvate: step 3/4. Functionally, functions in the biosynthesis of branched-chain amino acids. Catalyzes the dehydration of (2R,3R)-2,3-dihydroxy-3-methylpentanoate (2,3-dihydroxy-3-methylvalerate) into 2-oxo-3-methylpentanoate (2-oxo-3-methylvalerate) and of (2R)-2,3-dihydroxy-3-methylbutanoate (2,3-dihydroxyisovalerate) into 2-oxo-3-methylbutanoate (2-oxoisovalerate), the penultimate precursor to L-isoleucine and L-valine, respectively. The polypeptide is Dihydroxy-acid dehydratase (Sulfurimonas denitrificans (strain ATCC 33889 / DSM 1251) (Thiomicrospira denitrificans (strain ATCC 33889 / DSM 1251))).